The chain runs to 222 residues: Beta-casein (222 aa).

The N-terminal stretch at 1-15 (MKVLILACLVALAIA) is a signal peptide. At threonine 27 the chain carries Phosphothreonine. Serine 30, serine 32, serine 33, and serine 34 each carry phosphoserine.

The protein belongs to the beta-casein family. As to expression, mammary gland specific. Secreted in milk.

It is found in the secreted. Functionally, important role in determination of the surface properties of the casein micelles. The sequence is that of Beta-casein (CSN2) from Capra hircus (Goat).